We begin with the raw amino-acid sequence, 27 residues long: Ganodermin (27 aa).

Its function is as follows. Has antifungal activity against B.cinera, F.oxysporum and P.piricola with IC(50) values of 15.2 uM, 12.4 uM and 18.1 uM, respectively. Lacks hemagglutinating activity towards rabbit erythrocytes. Lacks deoxyribonuclease, ribonuclease and protease inhibitory activities. The chain is Ganodermin from Ganoderma lucidum (Ling zhi medicinal fungus).